The chain runs to 367 residues: ELAV-like protein 3 (367 aa).

3 RRM domains span residues 39–117 (TNLI…YARP), 125–205 (ANLY…FANN), and 284–362 (WCIF…FKTS).

It belongs to the RRM elav family. Interacts with MAP1B light chain LC1. In terms of tissue distribution, brain specific. Expressed in the hippocampus with expression in CA1, CA3 and dentate gyrus.

Its function is as follows. RNA-binding protein that binds to AU-rich element (ARE) sequences of target mRNAs, including VEGF mRNA. May also bind poly-A tracts via RRM 3. May be involved in neuronal differentiation and maintenance. Plays a role in the stabilization of GAP43 mRNA and in spatial learning. This is ELAV-like protein 3 (Elavl3) from Mus musculus (Mouse).